The chain runs to 730 residues: Stonin-1 (730 aa).

3 disordered regions span residues 1–26 (MYST…KRKD), 38–83 (NGLK…PLST), and 132–159 (SPHV…AGPQ). 2 stretches are compositionally biased toward low complexity: residues 54-65 (PSSASSTPLSSP) and 132-143 (SPHVSLPSSHSH). Positions 269–402 (GWSFMLRIPE…KLPATAKPKN (134 aa)) constitute an SHD domain. The MHD domain maps to 407–710 (EQEICLDIQD…ACYNIQVEIE (304 aa)).

It belongs to the Stoned B family.

It localises to the cytoplasm. It is found in the membrane. Its function is as follows. May be involved in the endocytic machinery. This is Stonin-1 (Ston1) from Mus musculus (Mouse).